Here is a 518-residue protein sequence, read N- to C-terminus: Cytochrome P450 82E3 (518 aa).

The chain crosses the membrane as a helical span at residues valine 2–tryptophan 22. Lysine 254 is covalently cross-linked (Glycyl lysine isopeptide (Lys-Gly) (interchain with G-Cter in ubiquitin)). Cysteine 458 contacts heme.

This sequence belongs to the cytochrome P450 family. CYP82E2 subfamily. Heme is required as a cofactor. As to expression, expressed at low levels in green leaves.

It localises to the membrane. The protein operates within alkaloid biosynthesis; nicotine biosynthesis. In terms of biological role, no nicotine N-demethylase activity. The protein is Cytochrome P450 82E3 of Nicotiana tabacum (Common tobacco).